An 84-amino-acid polypeptide reads, in one-letter code: UPF0512 protein O (84 aa).

It belongs to the UPF0512 family.

This chain is UPF0512 protein O, found in Dictyostelium discoideum (Social amoeba).